A 142-amino-acid polypeptide reads, in one-letter code: Sec-independent protein translocase protein TatB (142 aa).

A helical transmembrane segment spans residues 1–21 (MFDIGASELLVLVIVAIVVIG). Residues 75–142 (RETAAQETAA…PAARPGSQQP (68 aa)) form a disordered region. The span at 76-94 (ETAAQETAAAQGQTPAAAE) shows a compositional bias: low complexity. Over residues 123-133 (AKVEARVEEAP) the composition is skewed to basic and acidic residues.

Belongs to the TatB family. The Tat system comprises two distinct complexes: a TatABC complex, containing multiple copies of TatA, TatB and TatC subunits, and a separate TatA complex, containing only TatA subunits. Substrates initially bind to the TatABC complex, which probably triggers association of the separate TatA complex to form the active translocon.

The protein resides in the cell inner membrane. Part of the twin-arginine translocation (Tat) system that transports large folded proteins containing a characteristic twin-arginine motif in their signal peptide across membranes. Together with TatC, TatB is part of a receptor directly interacting with Tat signal peptides. TatB may form an oligomeric binding site that transiently accommodates folded Tat precursor proteins before their translocation. The chain is Sec-independent protein translocase protein TatB from Novosphingobium aromaticivorans (strain ATCC 700278 / DSM 12444 / CCUG 56034 / CIP 105152 / NBRC 16084 / F199).